The chain runs to 1556 residues: uncharacterized protein (1556 aa).

Ser-2 bears the N-acetylserine mark. A compositionally biased stretch (basic and acidic residues) spans 145–156 (NQLENRKSLERK). The segment at 145-170 (NQLENRKSLERKPSRKRRKKNSNVND) is disordered. A Helicase ATP-binding domain is found at 378–583 (SGDYPVCAKG…MIMSYLKLHP (206 aa)). ATP is bound at residue 391 to 398 (EEMGLGKT). Position 810 is a phosphoserine (Ser-810). The segment at 810 to 850 (SEDEDEHMDERFGEKETSSGDESDREINGAKNHDNHNNDGM) is disordered. Composition is skewed to basic and acidic residues over residues 817 to 827 (MDERFGEKETS) and 834 to 846 (REIN…DNHN). Residues 1239-1277 (CSICLGEVEIGAIIKCGHYFCKSCILTWLRAHSKCPICK) form an RING-type zinc finger. Positions 1297 to 1309 (REKEIQEPRREGA) are enriched in basic and acidic residues. 2 disordered regions span residues 1297–1319 (REKE…SNEN) and 1508–1534 (EKSK…AKFE). Low complexity predominate over residues 1310–1319 (DSSQDNSNEN). In terms of domain architecture, Helicase C-terminal spans 1363 to 1531 (KLISYLRLKS…ETDNEESDDA (169 aa)). Basic and acidic residues predominate over residues 1508-1518 (EKSKKGDKYDE). The segment covering 1519-1529 (AQDETDNEESD) has biased composition (acidic residues).

The protein belongs to the SNF2/RAD54 helicase family.

Its subcellular location is the nucleus. In terms of biological role, is probably involved in a pathway contributing to genomic integrity. This is an uncharacterized protein from Saccharomyces cerevisiae (strain ATCC 204508 / S288c) (Baker's yeast).